A 218-amino-acid chain; its full sequence is GTP cyclohydrolase 1 (218 aa).

Positions 109, 112, and 180 each coordinate Zn(2+).

Belongs to the GTP cyclohydrolase I family. As to quaternary structure, toroid-shaped homodecamer, composed of two pentamers of five dimers.

The enzyme catalyses GTP + H2O = 7,8-dihydroneopterin 3'-triphosphate + formate + H(+). It functions in the pathway cofactor biosynthesis; 7,8-dihydroneopterin triphosphate biosynthesis; 7,8-dihydroneopterin triphosphate from GTP: step 1/1. This Aeromonas salmonicida (strain A449) protein is GTP cyclohydrolase 1.